The sequence spans 461 residues: MAQVLTEFDTIAAISTPIGEGGISIVRMSGEDAIKIANEVFKGADLAQVPTHTIHYGHIIDPDTGKTIDESMVTVLRAPKTFTCEDIVEINCHGGIVVTNHILQLLLKHGARMADPGEFTKRAFVNGRIDLTQAESVMDIVRAKTDKARQVAVSQLEGGLLHKIRTMRQEILDTLANVEVNIDYPEYDADTVTANQMADTAKSVIEKIDRLLKTAQEGKILRNGLATAIVGQPNVGKSSLLNYLTQSDKAIVTDVAGTTRDTLEEYVSVKGVPLELIDTAGIHHTDDKVEKIGVERSKKALERADLVLLLIDASKELTAEDKSLINETDSKKRIIILNKSDLGQKITVEQMKKLTGSEVISTSILKEDNMDELEELINKLFFAGIENSNDQVMVTNQRQTSLLHKAKSELEDVIQAVDDGIPVDIAQIDFTGAWDTLGEITGESAPDELITQLFSQFCLGK.

(6S)-5-formyl-5,6,7,8-tetrahydrofolate is bound by residues Arg-27, Glu-89, and Arg-128. Positions 224–382 (GLATAIVGQP…LEELINKLFF (159 aa)) constitute a TrmE-type G domain. Residue Asn-234 participates in K(+) binding. GTP-binding positions include 234–239 (NVGKSS), 253–259 (TDVAGTT), and 278–281 (DTAG). Mg(2+) is bound at residue Ser-238. K(+)-binding residues include Thr-253, Val-255, and Thr-258. Position 259 (Thr-259) interacts with Mg(2+). (6S)-5-formyl-5,6,7,8-tetrahydrofolate is bound at residue Lys-461.

This sequence belongs to the TRAFAC class TrmE-Era-EngA-EngB-Septin-like GTPase superfamily. TrmE GTPase family. As to quaternary structure, homodimer. Heterotetramer of two MnmE and two MnmG subunits. It depends on K(+) as a cofactor.

The protein localises to the cytoplasm. Functionally, exhibits a very high intrinsic GTPase hydrolysis rate. Involved in the addition of a carboxymethylaminomethyl (cmnm) group at the wobble position (U34) of certain tRNAs, forming tRNA-cmnm(5)s(2)U34. This chain is tRNA modification GTPase MnmE, found in Lactobacillus acidophilus (strain ATCC 700396 / NCK56 / N2 / NCFM).